Reading from the N-terminus, the 450-residue chain is Tubulin alpha-5 chain (450 aa).

Residues Gln11, Glu71, Gly144, Thr145, Thr179, Asn206, and Asn228 each coordinate GTP. Position 71 (Glu71) interacts with Mg(2+). The active site involves Glu254. Thr349 bears the Phosphothreonine mark. The interval 429-450 (EKDYEEVGAEGGDDEEDEGEDY) is disordered. The segment covering 431–450 (DYEEVGAEGGDDEEDEGEDY) has biased composition (acidic residues).

Belongs to the tubulin family. As to quaternary structure, dimer of alpha and beta chains. A typical microtubule is a hollow water-filled tube with an outer diameter of 25 nm and an inner diameter of 15 nM. Alpha-beta heterodimers associate head-to-tail to form protofilaments running lengthwise along the microtubule wall with the beta-tubulin subunit facing the microtubule plus end conferring a structural polarity. Microtubules usually have 13 protofilaments but different protofilament numbers can be found in some organisms and specialized cells. Mg(2+) serves as cofactor. Undergoes a tyrosination/detyrosination cycle, the cyclic removal and re-addition of a C-terminal tyrosine residue by the enzymes tubulin tyrosine carboxypeptidase (TTCP) and tubulin tyrosine ligase (TTL), respectively.

It is found in the cytoplasm. The protein localises to the cytoskeleton. It carries out the reaction GTP + H2O = GDP + phosphate + H(+). Its function is as follows. Tubulin is the major constituent of microtubules, a cylinder consisting of laterally associated linear protofilaments composed of alpha- and beta-tubulin heterodimers. Microtubules grow by the addition of GTP-tubulin dimers to the microtubule end, where a stabilizing cap forms. Below the cap, tubulin dimers are in GDP-bound state, owing to GTPase activity of alpha-tubulin. The chain is Tubulin alpha-5 chain (TUBA5) from Arabidopsis thaliana (Mouse-ear cress).